The sequence spans 297 residues: Syntaxin-4 (297 aa).

Residues 1–12 are compositionally biased toward basic and acidic residues; it reads MRDRTHELRQGD. The disordered stretch occupies residues 1 to 21; it reads MRDRTHELRQGDDSSDEEDKE. The Cytoplasmic segment spans residues 1–275; sequence MRDRTHELRQ…QKKARKKKVL (275 aa). Residues serine 14 and serine 15 each carry the phosphoserine modification. Residue threonine 31 is modified to Phosphothreonine. A phosphoserine mark is found at serine 36, serine 117, serine 208, and serine 248. Positions 43–163 form a coiled coil; that stretch reads HKVRTIRQTI…ERIRRQLKIT (121 aa). Positions 154-297 are interaction with CENPF; that stretch reads ERIRRQLKIT…AVIIGVTVVG (144 aa). Residues 200 to 262 enclose the t-SNARE coiled-coil homology domain; sequence LNEISARHSE…ERGQEHVKTA (63 aa). The helical; Anchor for type IV membrane protein transmembrane segment at 276–296 threads the bilayer; the sequence is IAICVSITVVLLAVIIGVTVV. Residue glycine 297 is a topological domain, extracellular.

The protein belongs to the syntaxin family. As to quaternary structure, component of the SNARE complex composed of STX4, SNAP23 and VAMP7 that interacts with SYT7 during lysosomal exocytosis. Found in a complex with VAMP8 and SNAP23. Detected in a complex with SNAP23 and STXBP4. Interacts with VAMP2. Interacts with SNAP23 and SNAPIN. Interacts with LLGL1. Interacts (via C-terminus) with CENPF. Interacts with DOC2B. Interacts with STXBP6. Interacts with STXBP3; excludes interaction with DOC2B and SNAP25. Interacts with STXBP4; excludes interaction with VAMP2. Interacts with STXBP5L. As to expression, expressed in neutrophils and neutrophil-differentiated HL-60 cells. Expression in neutrophils increases with differentiation.

It is found in the cell membrane. The protein localises to the cell projection. The protein resides in the neuron projection. It localises to the stereocilium. In terms of biological role, plasma membrane t-SNARE that mediates docking of transport vesicles. Necessary for the translocation of SLC2A4 from intracellular vesicles to the plasma membrane. In neurons, recruited at neurite tips to membrane domains rich in the phospholipid 1-oleoyl-2-palmitoyl-PC (OPPC) which promotes neurite tip surface expression of the dopamine transporter SLC6A3/DAT by facilitating fusion of SLC6A3-containing transport vesicles with the plasma membrane. Together with STXB3 and VAMP2, may also play a role in docking/fusion of intracellular GLUT4-containing vesicles with the cell surface in adipocytes and in docking of synaptic vesicles at presynaptic active zones. Required for normal hearing. This Homo sapiens (Human) protein is Syntaxin-4 (STX4).